Here is a 446-residue protein sequence, read N- to C-terminus: UDP-N-acetylmuramoylalanine--D-glutamate ligase (446 aa).

Residue 115 to 121 coordinates ATP; it reads GTNGKTT.

The protein belongs to the MurCDEF family.

It localises to the cytoplasm. It carries out the reaction UDP-N-acetyl-alpha-D-muramoyl-L-alanine + D-glutamate + ATP = UDP-N-acetyl-alpha-D-muramoyl-L-alanyl-D-glutamate + ADP + phosphate + H(+). The protein operates within cell wall biogenesis; peptidoglycan biosynthesis. In terms of biological role, cell wall formation. Catalyzes the addition of glutamate to the nucleotide precursor UDP-N-acetylmuramoyl-L-alanine (UMA). The chain is UDP-N-acetylmuramoylalanine--D-glutamate ligase from Trichlorobacter lovleyi (strain ATCC BAA-1151 / DSM 17278 / SZ) (Geobacter lovleyi).